A 413-amino-acid polypeptide reads, in one-letter code: Palmitoyl-acyl carrier protein thioesterase, chloroplastic (413 aa).

The N-terminal 57 residues, 1–57 (MVATAVTSAFFPVTSSPDSSDSKNKKLGSIKSKPSVSSGSLQVKANAQAPPKINGTV), are a transit peptide targeting the chloroplast. The disordered stretch occupies residues 12-79 (PVTSSPDSSD…DGASSPPPRT (68 aa)). Positions 29-40 (SIKSKPSVSSGS) are enriched in low complexity. Residues Asn-310, His-312, and Cys-347 contribute to the active site. The segment at 394–413 (WRPKHAKSSANMDQITAKRA) is disordered.

The protein belongs to the acyl-ACP thioesterase family.

The protein localises to the plastid. The protein resides in the chloroplast. The enzyme catalyses hexadecanoyl-[ACP] + H2O = hexadecanoate + holo-[ACP] + H(+). Functionally, plays an essential role in chain termination during de novo fatty acid synthesis. High thioesterase activity for palmitoyl-ACP versus other acyl-ACPs. This Gossypium hirsutum (Upland cotton) protein is Palmitoyl-acyl carrier protein thioesterase, chloroplastic (FATB1).